Consider the following 603-residue polypeptide: Elongation factor 4 (603 aa).

The 183-residue stretch at 7–189 folds into the tr-type G domain; sequence SRIRNFCIIA…SIVHLVPPPS (183 aa). GTP is bound by residues 19 to 24 and 136 to 139; these read DHGKST and NKID.

It belongs to the TRAFAC class translation factor GTPase superfamily. Classic translation factor GTPase family. LepA subfamily.

Its subcellular location is the cell inner membrane. The enzyme catalyses GTP + H2O = GDP + phosphate + H(+). Its function is as follows. Required for accurate and efficient protein synthesis under certain stress conditions. May act as a fidelity factor of the translation reaction, by catalyzing a one-codon backward translocation of tRNAs on improperly translocated ribosomes. Back-translocation proceeds from a post-translocation (POST) complex to a pre-translocation (PRE) complex, thus giving elongation factor G a second chance to translocate the tRNAs correctly. Binds to ribosomes in a GTP-dependent manner. The protein is Elongation factor 4 of Crocosphaera subtropica (strain ATCC 51142 / BH68) (Cyanothece sp. (strain ATCC 51142)).